The chain runs to 2497 residues: Integrator complex subunit 1 homolog (2497 aa).

Residues 1–10 (MMLNKIKRSK) are compositionally biased toward basic residues. 6 disordered regions span residues 1-151 (MMLN…NNNI), 300-337 (QPQPPQQQQTKQPVNIKTQPQQQQQQQQQPQPQQIKKS), 946-965 (QQQQQQLQTPQQQQQQQQPT), 1028-1108 (TTTT…TSSS), 1234-1292 (INNN…NQKS), and 1572-1604 (NNNNNNNNNNNNNNNNNNNNNNNNNNNNNNNIT). Composition is skewed to low complexity over residues 37–46 (SDNNNNNSND), 60–151 (NNSI…NNNI), 305–333 (QQQQTKQPVNIKTQPQQQQQQQQQPQPQQ), 946–963 (QQQQQQLQTPQQQQQQQQ), and 1028–1058 (TTTTTSSTTTTTTTTTSTTTSTSTSSSSSSL). Residues 1075-1091 (SGLSGSSNGINQSSDSI) are compositionally biased toward polar residues. 4 stretches are compositionally biased toward low complexity: residues 1097 to 1108 (STSPTTTTTSSS), 1234 to 1265 (INNNDNNNNNNNNNNNNNNNNNNNNNDNNINK), 1272 to 1289 (HSNSMANNNLPNNNNKNN), and 1572 to 1602 (NNNNNNNNNNNNNNNNNNNNNNNNNNNNNNN). The stretch at 1645–1675 (RILKNTTQQKQQKQQQKESVQKSIQSLSKLI) forms a coiled coil. Low complexity predominate over residues 2084 to 2115 (QQQQQQQQQQQQQQKQQSNNSNNINNNNNNNN). 2 disordered regions span residues 2084–2123 (QQQQQQQQQQQQQQKQQSNNSNNINNNNNNNNSEKKQKSK) and 2329–2350 (NNNNNNNNNNNNNNNNNNNNNN).

This sequence belongs to the Integrator subunit 1 family. Component of the Integrator complex. The core complex associates with protein phosphatase 2A subunits to form the Integrator-PP2A (INTAC) complex.

It is found in the nucleus. In terms of biological role, component of the integrator complex, a multiprotein complex that terminates RNA polymerase II (Pol II) transcription in the promoter-proximal region of genes. The integrator complex provides a quality checkpoint during transcription elongation by driving premature transcription termination of transcripts that are unfavorably configured for transcriptional elongation: the complex terminates transcription by (1) catalyzing dephosphorylation of the C-terminal domain (CTD) of Pol II subunit polr2a, (2) degrading the exiting nascent RNA transcript via endonuclease activity and (3) promoting the release of Pol II from bound DNA. The integrator complex is also involved in terminating the synthesis of non-coding Pol II transcripts, such as enhancer RNAs (eRNAs), small nuclear RNAs (snRNAs), telomerase RNAs and long non-coding RNAs (lncRNAs). The sequence is that of Integrator complex subunit 1 homolog (ints1) from Dictyostelium discoideum (Social amoeba).